The sequence spans 227 residues: Venom allergen 5.01 (227 aa).

The signal sequence occupies residues 1 to 23; sequence MEIGGLVYLILIITIINLSFGET. Disulfide bonds link Cys-27–Cys-39, Cys-31–Cys-124, Cys-49–Cys-117, and Cys-193–Cys-210. The SCP domain maps to 68–212; it reads LKRHNDFRQN…WYTHYLVCNY (145 aa).

This sequence belongs to the CRISP family. Venom allergen 5-like subfamily. In terms of tissue distribution, expressed by the venom gland.

It localises to the secreted. This chain is Venom allergen 5.01, found in Dolichovespula maculata (Bald-faced hornet).